The chain runs to 289 residues: 4-hydroxybenzoate octaprenyltransferase (289 aa).

Transmembrane regions (helical) follow at residues 33-53 (LWALWVAAPGLPPLWILAVFV), 99-119 (LFVVLVVLAFLLVLTLNTMTI), 141-161 (LPQVVLGAAFGWSIPMAFAAV), 163-183 (ESVPLSCWLMFLANILWAVAY), 213-233 (LIIGILQVAVLALMVVIGRLN), 238-258 (EFYWSVLVAGLLFAYQQKLIV), and 268-288 (AFLNNNYVGLVLFLGLAMSYW).

The protein belongs to the UbiA prenyltransferase family. Mg(2+) serves as cofactor.

It localises to the cell inner membrane. It catalyses the reaction all-trans-octaprenyl diphosphate + 4-hydroxybenzoate = 4-hydroxy-3-(all-trans-octaprenyl)benzoate + diphosphate. Its pathway is cofactor biosynthesis; ubiquinone biosynthesis. In terms of biological role, catalyzes the prenylation of para-hydroxybenzoate (PHB) with an all-trans polyprenyl group. Mediates the second step in the final reaction sequence of ubiquinone-8 (UQ-8) biosynthesis, which is the condensation of the polyisoprenoid side chain with PHB, generating the first membrane-bound Q intermediate 3-octaprenyl-4-hydroxybenzoate. This Enterobacter sp. (strain 638) protein is 4-hydroxybenzoate octaprenyltransferase.